Consider the following 361-residue polypeptide: Ribosomal RNA large subunit methyltransferase M (361 aa).

S-adenosyl-L-methionine contacts are provided by residues S193, 226–229 (CPGG), D245, D265, and D283. The active-site Proton acceptor is K312.

This sequence belongs to the class I-like SAM-binding methyltransferase superfamily. RNA methyltransferase RlmE family. RlmM subfamily. In terms of assembly, monomer.

Its subcellular location is the cytoplasm. It carries out the reaction cytidine(2498) in 23S rRNA + S-adenosyl-L-methionine = 2'-O-methylcytidine(2498) in 23S rRNA + S-adenosyl-L-homocysteine + H(+). In terms of biological role, catalyzes the 2'-O-methylation at nucleotide C2498 in 23S rRNA. In Histophilus somni (strain 2336) (Haemophilus somnus), this protein is Ribosomal RNA large subunit methyltransferase M.